We begin with the raw amino-acid sequence, 146 residues long: Prolactin-inducible protein homolog (146 aa).

Residues 1 to 26 (MQGLSFTFSAVTLFLVLCLQLGIIES) form the signal peptide. Position 27 is a pyrrolidone carboxylic acid (Gln27). 2 cysteine pairs are disulfide-bonded: Cys65/Cys91 and Cys89/Cys123.

It belongs to the PIP family. Monomer. Interacts with AZGP1. As to expression, lacrimal and submaxillary glands.

The protein resides in the secreted. The polypeptide is Prolactin-inducible protein homolog (Pip) (Mus musculus (Mouse)).